The following is a 372-amino-acid chain: MKYDLIIIGSGSVGAAAGYYATRAGLNVLMTDAHMPPHQHGSHHGDTRLIRHAYGEGEKYVPLVLRAQMLWDELSRHNEDDPIFVRSGVINLGPADSAFLANVAHSAEQWQLNVEKLDAQGIMARWPEIRVPDNYIGLFETDSGFLRSELAIKTWIQLAKEAGCAQLFNCPVTAIRHDDDGVTIETADGEYQAKKAIVCAGTWVKDLLPELPVQPVRKVFAWYQADGRYSVKNKFPAFTGELPNGDQYYGFPAENDALKIGKHNGGQVIHSADERVPFAEVVSDGSEAFPFLRNVLPGIGCCLYGAACTYDNSPDEDFIIDTLPGHDNTLLITGLSGHGFKFASVLGEIAADFAQDKKSDFDLTPFRLSRFQ.

4 to 34 contacts FAD; sequence DLIIIGSGSVGAAAGYYATRAGLNVLMTDAH. S-8alpha-FAD cysteine is present on cysteine 308.

The protein belongs to the MSOX/MTOX family. MTOX subfamily. Monomer. FAD is required as a cofactor.

It catalyses the reaction N(alpha)-methyl-L-tryptophan + O2 + H2O = L-tryptophan + formaldehyde + H2O2. In terms of biological role, catalyzes the oxidative demethylation of N-methyl-L-tryptophan. This Escherichia coli O1:K1 / APEC protein is N-methyl-L-tryptophan oxidase.